The primary structure comprises 66 residues: Large ribosomal subunit protein bL32 (66 aa).

This sequence belongs to the bacterial ribosomal protein bL32 family.

The chain is Large ribosomal subunit protein bL32 from Rickettsia canadensis (strain McKiel).